Reading from the N-terminus, the 198-residue chain is MSAENKIEEITEDQVPQIEENSTIVIKKEEKAARALISKLNLQKVEGITRVVLKRTRQHIFVIANPEVYKTPTGNSYVVFGEAQHEDMQATARAAQIAAAQAQQAAAETGSVSEAAAAGEVGAELASKDPASITADLEAASLSKDEDAEDEAEADATGLEDSDIKLVMEQANVSRNKAINGLKKNDSDVVNTIMDLCK.

Residues 48 to 113 (ITRVVLKRTR…QAAAETGSVS (66 aa)) enclose the NAC-A/B domain. In terms of domain architecture, UBA spans 159–198 (LEDSDIKLVMEQANVSRNKAINGLKKNDSDVVNTIMDLCK).

Belongs to the NAC-alpha family. As to quaternary structure, part of the nascent polypeptide-associated complex (NAC), consisting of EGD2 and EGD1. NAC associates with ribosomes via EGD1.

Its subcellular location is the cytoplasm. It localises to the nucleus. Functionally, component of the nascent polypeptide-associated complex (NAC), a dynamic component of the ribosomal exit tunnel, protecting the emerging polypeptides from interaction with other cytoplasmic proteins to ensure appropriate nascent protein targeting. The NAC complex also promotes mitochondrial protein import by enhancing productive ribosome interactions with the outer mitochondrial membrane and blocks the inappropriate interaction of ribosomes translating non-secretory nascent polypeptides with translocation sites in the membrane of the endoplasmic reticulum. EGD2 may also be involved in transcription regulation. This is Nascent polypeptide-associated complex subunit alpha (EGD2) from Yarrowia lipolytica (strain CLIB 122 / E 150) (Yeast).